A 62-amino-acid polypeptide reads, in one-letter code: Large ribosomal subunit protein uL30 (62 aa).

It belongs to the universal ribosomal protein uL30 family. Part of the 50S ribosomal subunit.

In Halalkalibacterium halodurans (strain ATCC BAA-125 / DSM 18197 / FERM 7344 / JCM 9153 / C-125) (Bacillus halodurans), this protein is Large ribosomal subunit protein uL30.